Reading from the N-terminus, the 357-residue chain is GTPase Obg (357 aa).

The Obg domain maps to 1–159 (MKFVDEAEIQ…RTLKLELKLL (159 aa)). In terms of domain architecture, OBG-type G spans 160 to 343 (ADIGMLGFPN…IMKSAMTLFE (184 aa)). GTP is bound by residues 166–173 (GFPNVGKS), 191–195 (FTTLY), 213–216 (DVPG), 293–296 (NKAD), and 324–326 (SAV). Mg(2+)-binding residues include Ser173 and Thr193.

This sequence belongs to the TRAFAC class OBG-HflX-like GTPase superfamily. OBG GTPase family. In terms of assembly, monomer. Mg(2+) serves as cofactor.

Its subcellular location is the cytoplasm. Its function is as follows. An essential GTPase which binds GTP, GDP and possibly (p)ppGpp with moderate affinity, with high nucleotide exchange rates and a fairly low GTP hydrolysis rate. Plays a role in control of the cell cycle, stress response, ribosome biogenesis and in those bacteria that undergo differentiation, in morphogenesis control. The chain is GTPase Obg from Xylella fastidiosa (strain 9a5c).